A 429-amino-acid polypeptide reads, in one-letter code: C4-dicarboxylate transport protein (429 aa).

8 helical membrane-spanning segments follow: residues 3-23 (VSIFKTLYFQVLTAITIGVLL), 44-64 (LIKMIIAPVIFCTVVTGIAGM), 76-96 (IALLYFEIVSTLALLIGLVVV), 144-164 (AFASGNILQVLLFAVLFGFAL), 184-204 (VIFGVINMIMRLAPLGAFGAM), 222-242 (LILCFYLTCILFVVLVLGTIA), 331-351 (TLLVVLLLSSKGAAGVTGSGF), and 352-372 (IVLAATISAVGHLPLAGLALI).

Belongs to the dicarboxylate/amino acid:cation symporter (DAACS) (TC 2.A.23) family.

The protein localises to the cell inner membrane. Responsible for the transport of dicarboxylates such as succinate, fumarate, and malate from the periplasm across the membrane. In Yersinia pestis bv. Antiqua (strain Antiqua), this protein is C4-dicarboxylate transport protein.